Reading from the N-terminus, the 396-residue chain is Tryptophan synthase beta chain (396 aa).

Residue Lys-88 is modified to N6-(pyridoxal phosphate)lysine.

Belongs to the TrpB family. In terms of assembly, tetramer of two alpha and two beta chains. It depends on pyridoxal 5'-phosphate as a cofactor.

It carries out the reaction (1S,2R)-1-C-(indol-3-yl)glycerol 3-phosphate + L-serine = D-glyceraldehyde 3-phosphate + L-tryptophan + H2O. The protein operates within amino-acid biosynthesis; L-tryptophan biosynthesis; L-tryptophan from chorismate: step 5/5. Functionally, the beta subunit is responsible for the synthesis of L-tryptophan from indole and L-serine. In Shewanella sp. (strain W3-18-1), this protein is Tryptophan synthase beta chain.